Reading from the N-terminus, the 247-residue chain is UPF0246 protein CD630_18230 (247 aa).

The protein belongs to the UPF0246 family.

This Clostridioides difficile (strain 630) (Peptoclostridium difficile) protein is UPF0246 protein CD630_18230.